The following is a 480-amino-acid chain: Coronin-2B (480 aa).

WD repeat units lie at residues 29–77, 78–127, 128–170, 171–212, 213–259, 260–305, and 306–345; these read HCFD…GRIE, PNYP…RNMT, EALL…LDVG, EPVK…PRSG, RVLQ…EDLS, MPLI…TEKP, and YLSY…KLVT. The stretch at 436–479 forms a coiled coil; sequence NELLRMFFRQQDEIRRLKEELAQKDIRIRQLQLELKNLRNSPKN.

This sequence belongs to the WD repeat coronin family. As to quaternary structure, binds to F-actin and to vinculin. Expressed predominantly in brain.

Its subcellular location is the cytoplasm. It localises to the cytoskeleton. May play a role in the reorganization of neuronal actin structure. The sequence is that of Coronin-2B (CORO2B) from Homo sapiens (Human).